The following is a 50-amino-acid chain: Protein PsbN (50 aa).

Residues 14–34 traverse the membrane as a helical segment; it reads IAVTILALLLALTGFGLWTAF.

It belongs to the PsbN family.

It is found in the cellular thylakoid membrane. Functionally, may play a role in photosystem I and II biogenesis. The polypeptide is Protein PsbN (Prochlorococcus marinus (strain MIT 9301)).